Reading from the N-terminus, the 856-residue chain is Rod cGMP-specific 3',5'-cyclic phosphodiesterase subunit beta (856 aa).

S2 is modified (N-acetylserine). GAF domains lie at 71–220 (NMER…TLNL) and 252–429 (DIER…GWSV). A PDEase domain is found at 481–814 (EEDELGILLK…KEWKALADEY (334 aa)). H557 functions as the Proton donor in the catalytic mechanism. 4 residues coordinate a divalent metal cation: H561, H597, D598, and D718. A compositionally biased stretch (basic and acidic residues) spans 823 to 833 (EEKQQQEDRTT). A disordered region spans residues 823–842 (EEKQQQEDRTTAKKAGTEIC). C853 is lipidated: S-geranylgeranyl cysteine. Residues 854–856 (CIL) constitute a propeptide, removed in mature form.

Belongs to the cyclic nucleotide phosphodiesterase family. Oligomer composed of two catalytic chains (alpha and beta), an inhibitory chain (gamma) and the delta chain. A divalent metal cation is required as a cofactor.

The protein localises to the membrane. The protein resides in the cell projection. It localises to the cilium. It is found in the photoreceptor outer segment. It catalyses the reaction 3',5'-cyclic GMP + H2O = GMP + H(+). Rod-specific cGMP phosphodiesterase that catalyzes the hydrolysis of 3',5'-cyclic GMP. Necessary for the formation of a functional phosphodiesterase holoenzyme. Involved in retinal circadian rhythm photoentrainment via modulation of UVA and orange light-induced phase-shift of the retina clock. May participate in processes of transmission and amplification of the visual signal. The protein is Rod cGMP-specific 3',5'-cyclic phosphodiesterase subunit beta of Canis lupus familiaris (Dog).